We begin with the raw amino-acid sequence, 373 residues long: Putative protein YfkA (373 aa).

A Radical SAM core domain is found at 26–256; that stretch reads YGDMQLTNVE…DIRDENTWML (231 aa). [4Fe-4S] cluster is bound by residues Cys-42, Cys-46, and Cys-49.

Belongs to the radical SAM superfamily. [4Fe-4S] cluster serves as cofactor.

The polypeptide is Putative protein YfkA (yfkA) (Bacillus subtilis (strain 168)).